Here is a 248-residue protein sequence, read N- to C-terminus: PF03932 family protein CutC (248 aa).

This sequence belongs to the CutC family. Homodimer.

Its subcellular location is the cytoplasm. The sequence is that of PF03932 family protein CutC from Salmonella newport (strain SL254).